Consider the following 294-residue polypeptide: Probable 2-(5''-triphosphoribosyl)-3'-dephosphocoenzyme-A synthase (294 aa).

It belongs to the CitG/MdcB family.

It carries out the reaction 3'-dephospho-CoA + ATP = 2'-(5''-triphospho-alpha-D-ribosyl)-3'-dephospho-CoA + adenine. This chain is Probable 2-(5''-triphosphoribosyl)-3'-dephosphocoenzyme-A synthase, found in Streptococcus pyogenes serotype M49 (strain NZ131).